We begin with the raw amino-acid sequence, 378 residues long: Succinyl-diaminopimelate desuccinylase (378 aa).

Histidine 68 contacts Zn(2+). Aspartate 70 is an active-site residue. Aspartate 102 contributes to the Zn(2+) binding site. Residue glutamate 136 is the Proton acceptor of the active site. The Zn(2+) site is built by glutamate 137, glutamate 165, and histidine 351.

Belongs to the peptidase M20A family. DapE subfamily. As to quaternary structure, homodimer. Zn(2+) is required as a cofactor. The cofactor is Co(2+).

The enzyme catalyses N-succinyl-(2S,6S)-2,6-diaminopimelate + H2O = (2S,6S)-2,6-diaminopimelate + succinate. Its pathway is amino-acid biosynthesis; L-lysine biosynthesis via DAP pathway; LL-2,6-diaminopimelate from (S)-tetrahydrodipicolinate (succinylase route): step 3/3. Its function is as follows. Catalyzes the hydrolysis of N-succinyl-L,L-diaminopimelic acid (SDAP), forming succinate and LL-2,6-diaminopimelate (DAP), an intermediate involved in the bacterial biosynthesis of lysine and meso-diaminopimelic acid, an essential component of bacterial cell walls. This chain is Succinyl-diaminopimelate desuccinylase, found in Pseudomonas syringae pv. syringae.